Consider the following 211-residue polypeptide: Envelope protein UL45 homolog (211 aa).

Over 1–46 the chain is Intravirion; that stretch reads MMSPTPEDDRDLVVVRGRLRMMDNGAEHDRERRSYTAWPHLCCGCT. The helical; Signal-anchor for type II membrane protein transmembrane segment at 47-67 threads the bilayer; sequence IGIILTMFVIATTLLLASLFA. At 68–211 the chain is on the virion surface side; sequence FSYMSLESGT…SSILSNAIMK (144 aa). N-linked (GlcNAc...) asparagine; by host glycans are attached at residues Asn-96 and Asn-133.

This sequence belongs to the herpesviridae HHV-1 UL45 family.

Its subcellular location is the virion membrane. The protein is Envelope protein UL45 homolog (UL45H) of Gallid herpesvirus 2 (strain bc-1) (GaHV-2).